A 363-amino-acid chain; its full sequence is 3-isopropylmalate dehydrogenase A (363 aa).

78–89 (GPKWGTGAVRPE) serves as a coordination point for NAD(+). Arginine 96, arginine 106, arginine 135, and aspartate 222 together coordinate substrate. Residues aspartate 222, aspartate 247, and aspartate 251 each coordinate Mg(2+). 287–299 (GSAPDIAGKGIVN) contacts NAD(+).

This sequence belongs to the isocitrate and isopropylmalate dehydrogenases family. Homodimer. Mg(2+) serves as cofactor. Mn(2+) is required as a cofactor.

The protein resides in the cytoplasm. It catalyses the reaction (2R,3S)-3-isopropylmalate + NAD(+) = 4-methyl-2-oxopentanoate + CO2 + NADH. It participates in amino-acid biosynthesis; L-leucine biosynthesis; L-leucine from 3-methyl-2-oxobutanoate: step 3/4. Its function is as follows. Catalyzes the oxidation of 3-carboxy-2-hydroxy-4-methylpentanoate (3-isopropylmalate) to 3-carboxy-4-methyl-2-oxopentanoate. The product decarboxylates to 4-methyl-2 oxopentanoate. This Aspergillus niger protein is 3-isopropylmalate dehydrogenase A (leu2A).